A 911-amino-acid chain; its full sequence is Golgin IMH1 (911 aa).

2 disordered regions span residues 16–41 and 271–314; these read LAKG…SGLP and KELP…ETVD. Residues 101–280 adopt a coiled-coil conformation; sequence FFQDLNNKNN…KELPKAISHQ (180 aa). The span at 286–299 shows a compositional bias: basic residues; the sequence is NRRKKNRNKGKKNK. Residues Ser-308 and Ser-660 each carry the phosphoserine modification. 2 coiled-coil regions span residues 312 to 735 and 766 to 814; these read TVDN…ALKH and SKAD…KERQ. Positions 814 to 850 are disordered; the sequence is QYSDKSGRVSRSGSIGTLANANIDSSPANNSNPTKLE. Over residues 822-847 the composition is skewed to polar residues; the sequence is VSRSGSIGTLANANIDSSPANNSNPT. The residue at position 827 (Ser-827) is a Phosphoserine. Thr-830 carries the post-translational modification Phosphothreonine. Residues 861 to 909 enclose the GRIP domain; sequence DSEKNEKIAYIKNVLLGFLEHKEQRNQLLPVISMLLQLDSTDEKRLVMS.

In terms of assembly, forms oligomers and is present in high-molecular-mass complexes. Interacts with ARL1.

The protein localises to the cytoplasm. Its subcellular location is the golgi apparatus membrane. Its function is as follows. Involved in vesicular transport between an endosomal compartment and the Golgi apparatus. The protein is Golgin IMH1 (IMH1) of Saccharomyces cerevisiae (strain ATCC 204508 / S288c) (Baker's yeast).